Consider the following 484-residue polypeptide: uncharacterized protein (484 aa).

To M.thermoautotrophicum MTH1153.

This is an uncharacterized protein from Methanocaldococcus jannaschii (strain ATCC 43067 / DSM 2661 / JAL-1 / JCM 10045 / NBRC 100440) (Methanococcus jannaschii).